A 218-amino-acid polypeptide reads, in one-letter code: Putative copper transporter crmD (218 aa).

The next 2 helical transmembrane spans lie at 37 to 57 (YSLT…LGVL) and 176 to 196 (MLAV…GIVV).

The protein belongs to the copper transporter (Ctr) (TC 1.A.56) family. SLC31A subfamily.

The protein localises to the membrane. The catalysed reaction is Cu(2+)(in) = Cu(2+)(out). Putative copper transporter; part of the crm gene cluster that mediates the biosynthesis of a yet unidentified copper-responsive metabolite. Probably involved in the transport of copper, even if it does not act as a major copper transporter. In contrast to crmA, is not involved in the biosynthesis of fumivalines or fumicicolins. This is Putative copper transporter crmD from Aspergillus fumigatus (strain ATCC MYA-4609 / CBS 101355 / FGSC A1100 / Af293) (Neosartorya fumigata).